A 587-amino-acid polypeptide reads, in one-letter code: Arginine--tRNA ligase (587 aa).

A 'HIGH' region motif is present at residues 126-136; it reads ANPTGPLHVGH.

The protein belongs to the class-I aminoacyl-tRNA synthetase family. In terms of assembly, monomer.

Its subcellular location is the cytoplasm. The catalysed reaction is tRNA(Arg) + L-arginine + ATP = L-arginyl-tRNA(Arg) + AMP + diphosphate. The sequence is that of Arginine--tRNA ligase from Azoarcus sp. (strain BH72).